Consider the following 119-residue polypeptide: Fluoride-specific ion channel FluC 1 (119 aa).

Transmembrane regions (helical) follow at residues 6–26 (VALVAGGGFAGALCRHGIAVV), 31–51 (FPWGTLVVNVAGAFLLGAIVY), 66–86 (VVATGFLSSFTTYSTFAGETI), and 91–111 (RLAALNVVGNYALGFVAVLVA).

Belongs to the fluoride channel Fluc/FEX (TC 1.A.43) family.

Its subcellular location is the cell membrane. The enzyme catalyses fluoride(in) = fluoride(out). Functionally, fluoride-specific ion channel. Important for reducing fluoride concentration in the cell, thus reducing its toxicity. The sequence is that of Fluoride-specific ion channel FluC 1 from Natronomonas pharaonis (strain ATCC 35678 / DSM 2160 / CIP 103997 / JCM 8858 / NBRC 14720 / NCIMB 2260 / Gabara) (Halobacterium pharaonis).